We begin with the raw amino-acid sequence, 411 residues long: Serpin A12 (411 aa).

Residues 1-20 (MNLVLGLGLFLAGLLTVKGL) form the signal peptide. N-linked (GlcNAc...) asparagine glycans are attached at residues asparagine 92 and asparagine 267. The interval 364–382 (GTEGAAGSGAQTLPMETPR) is reactive center loop.

Belongs to the serpin family. In terms of assembly, forms a stable complex with KLK7. Glycosylation slightly decreases affinity for heparin, but otherwise has no significant effect on KLK7 inhibitory activity or thermal stability of the protein. As to expression, expressed in visceral adipose tissues.

It is found in the secreted. With respect to regulation, inhibition of KLK7 is enhanced by heparin. Functionally, adipokine that modulates insulin action by specifically inhibiting its target protease KLK7 in white adipose tissues. This Rattus norvegicus (Rat) protein is Serpin A12 (Serpina12).